Consider the following 360-residue polypeptide: Small ribosomal subunit protein bS1m (360 aa).

Low complexity predominate over residues 1–15; sequence MSSSNLSSILRNSRI. The tract at residues 1-31 is disordered; sequence MSSSNLSSILRNSRIAQVPKPKGPLFSPDKK.

The protein belongs to the bacterial ribosomal protein bS1 family. As to quaternary structure, component of the mitochondrial small ribosomal subunit.

It is found in the mitochondrion. Its function is as follows. Involved in mitochondrial genome encoded proteins translation. This chain is Small ribosomal subunit protein bS1m (MRP51), found in Eremothecium gossypii (strain ATCC 10895 / CBS 109.51 / FGSC 9923 / NRRL Y-1056) (Yeast).